Consider the following 379-residue polypeptide: Oxysterol-binding protein-related protein 4C (379 aa).

The protein belongs to the OSBP family. As to expression, expressed in flowers.

May be involved in the transport of sterols. The chain is Oxysterol-binding protein-related protein 4C (ORP4C) from Arabidopsis thaliana (Mouse-ear cress).